Reading from the N-terminus, the 406-residue chain is MAVNLTEKTAEQLPDIDGIALYTAQAGVKKPGHTDLTLIAVAAGSTVGAVFTTNRFCAAPVHIAKSHLFDEDGVRALVINTGNANAGTGAQGRIDALAVCAAAARQIGCKPNQVLPFSTGVILEPLPADKIIAALPKMQPAFWNEAARAIMTTDTVPKAASREGKVGDKHTVRATGIAKGSGMIHPNMATMLGFIATDAKVSQPVLQLMTQEIADETFNTITVDGDTSTNDSFVIIATGKNSQSEIDNIADPRYAQLKELLCSLALELAQAIVRDGEGATKFITVRVENAKTRDEARQAAYAVARSPLVKTAFFASDPNLGRLLAAIGYAGVADLDTDLVEMYLDDILVAEHGGRAASYTEAQGQAVMSKAEITVRIKLHRGQAAATVYTCDLSHGYVSINADYRS.

6 residues coordinate substrate: T152, K179, T190, E277, N401, and S406. T190 (nucleophile) is an active-site residue.

Belongs to the ArgJ family. In terms of assembly, heterotetramer of two alpha and two beta chains.

It is found in the cytoplasm. It carries out the reaction N(2)-acetyl-L-ornithine + L-glutamate = N-acetyl-L-glutamate + L-ornithine. The enzyme catalyses L-glutamate + acetyl-CoA = N-acetyl-L-glutamate + CoA + H(+). It functions in the pathway amino-acid biosynthesis; L-arginine biosynthesis; L-ornithine and N-acetyl-L-glutamate from L-glutamate and N(2)-acetyl-L-ornithine (cyclic): step 1/1. It participates in amino-acid biosynthesis; L-arginine biosynthesis; N(2)-acetyl-L-ornithine from L-glutamate: step 1/4. Functionally, catalyzes two activities which are involved in the cyclic version of arginine biosynthesis: the synthesis of N-acetylglutamate from glutamate and acetyl-CoA as the acetyl donor, and of ornithine by transacetylation between N(2)-acetylornithine and glutamate. The protein is Arginine biosynthesis bifunctional protein ArgJ of Neisseria meningitidis serogroup A / serotype 4A (strain DSM 15465 / Z2491).